A 487-amino-acid chain; its full sequence is E3 ubiquitin-protein ligase TRIM50 (487 aa).

The RING-type zinc-finger motif lies at 16–57 (CPICLEVFKEPLMLQCGHSYCKGCLVSLSCHLDAELRCPVCR). A B box-type zinc finger spans residues 84–125 (PEPKVCVHHRNPLSLFCEKDQELICGLCGLLGSHQHHPVTPV). 4 residues coordinate Zn(2+): cysteine 89, histidine 92, cysteine 111, and histidine 117. Coiled-coil stretches lie at residues 125–169 (VSTV…NESD) and 204–235 (LVAS…FGNE). Positions 276–475 (DIKLTVWKRL…LPMVLPPPSG (200 aa)) constitute a B30.2/SPRY domain. Lysine 373 is modified (N6-acetyllysine). The interval 468 to 487 (MVLPPPSGPGPLSPEQPTKL) is disordered. The segment covering 469–481 (VLPPPSGPGPLSP) has biased composition (pro residues).

It belongs to the TRIM/RBCC family. As to quaternary structure, can form dimers and trimers. Interacts with several E2 ubiquitin-conjugating enzymes, including UBE2L6, UBE2E1, UBE2E3. No interaction with UBE2H. Interacts with BECN1. Interacts with SQSTM1. Interacts with NLRP3. Auto-ubiquitinated. Post-translationally, acetylated by EP300 and KAT2B. HDAC6 drives TRIM50 deacetylation. Acetylation antagonizes with TRIM50 ubiquitination.

The protein localises to the cytoplasm. The enzyme catalyses S-ubiquitinyl-[E2 ubiquitin-conjugating enzyme]-L-cysteine + [acceptor protein]-L-lysine = [E2 ubiquitin-conjugating enzyme]-L-cysteine + N(6)-ubiquitinyl-[acceptor protein]-L-lysine.. E3 ubiquitin-protein ligase that ubiquitinates Beclin-1/BECN1 in a 'Lys-63'-dependent manner enhancing its binding to ULK1. In turn, promotes starvation-induced autophagy activation. Also interacts with p62/SQSTM1 protein and thereby induces the formation and the autophagy clearance of aggresome-associated polyubiquitinated proteins through HDAC6 interaction. Also promotes NLRP3 inflammasome activation by directly inducing NLRP3 oligomerization independent of its E3 ligase function. The protein is E3 ubiquitin-protein ligase TRIM50 of Homo sapiens (Human).